We begin with the raw amino-acid sequence, 296 residues long: Protoheme IX farnesyltransferase (296 aa).

A run of 9 helical transmembrane segments spans residues 11-31 (PGII…AAQG), 35-55 (YPLF…GCVF), 84-104 (VTLV…YIAA), 107-127 (LAMW…SLYM), 132-152 (VYGT…GYCA), 162-182 (LILL…IAIF), 208-228 (ITLY…GGYA), 229-249 (GYKY…MALS), and 264-284 (LFVF…VDSM).

The protein belongs to the UbiA prenyltransferase family. Protoheme IX farnesyltransferase subfamily.

The protein localises to the cell inner membrane. The enzyme catalyses heme b + (2E,6E)-farnesyl diphosphate + H2O = Fe(II)-heme o + diphosphate. The protein operates within porphyrin-containing compound metabolism; heme O biosynthesis; heme O from protoheme: step 1/1. In terms of biological role, converts heme B (protoheme IX) to heme O by substitution of the vinyl group on carbon 2 of heme B porphyrin ring with a hydroxyethyl farnesyl side group. This chain is Protoheme IX farnesyltransferase, found in Pectobacterium carotovorum subsp. carotovorum (strain PC1).